The primary structure comprises 604 residues: Elongation factor 4 (604 aa).

The tr-type G domain maps to K10 to S191. GTP is bound by residues D22–T27 and N138–D141.

It belongs to the TRAFAC class translation factor GTPase superfamily. Classic translation factor GTPase family. LepA subfamily.

It localises to the cell inner membrane. It catalyses the reaction GTP + H2O = GDP + phosphate + H(+). Required for accurate and efficient protein synthesis under certain stress conditions. May act as a fidelity factor of the translation reaction, by catalyzing a one-codon backward translocation of tRNAs on improperly translocated ribosomes. Back-translocation proceeds from a post-translocation (POST) complex to a pre-translocation (PRE) complex, thus giving elongation factor G a second chance to translocate the tRNAs correctly. Binds to ribosomes in a GTP-dependent manner. The polypeptide is Elongation factor 4 (Helicobacter acinonychis (strain Sheeba)).